Here is a 182-residue protein sequence, read N- to C-terminus: Helofensin-3 (182 aa).

The signal sequence occupies residues 1–26; the sequence is MQMDWLFIAVISGIGLLSSGVPGTQG. One copy of the C(6)C(4)C(9)C(6)CC 1; approximate repeat lies at 27-64; sequence AYTTEQCRALNGSCNFYACFPKNVIIGKCDWWGWSCCA. Residues 65–101 form a C(6)C(4)C(9)C(6)CC 2; approximate repeat; that stretch reads RTPLERCTAKKGTCTKTGCTKTDTDHGPCDGGAQCCQ. One copy of the C(6)C(4)C(9)C(6)CC 3; approximate repeat lies at 102–138; that stretch reads RDPVKYCKFHGNVCGRGKCPMDHIPIGECTPGYPCCK. The stretch at 139–176 is one C(6)C(4)C(9)C(6)CC 4; approximate repeat; the sequence is RDGPAYCKSKGGKCLNRCPQIVPTNVIGVCATGVPCCK.

It belongs to the beta-defensin family. Helofensin subfamily. As to expression, expressed by the mandibular venom gland.

The protein resides in the secreted. Lethal toxin which possesses an inhibitory effect on direct electrical stimulation of the isolated hemi-diaphragm of mice. Neither hemorrhagic nor hemolytic activities are detected. Phospholipase A2 activity, proteolytic activity and arginine esterolytic activity are absent. In Heloderma suspectum cinctum (Banded Gila monster), this protein is Helofensin-3.